The chain runs to 562 residues: Putative transport protein YPA_0617 (562 aa).

Transmembrane regions (helical) follow at residues L8–G28, L37–I57, F66–F86, M94–F114, I118–A138, and N158–A178. RCK C-terminal domains are found at residues L202–N288 and K290–F373. 5 consecutive transmembrane segments (helical) span residues L383–F403, F406–L426, F447–S467, M475–A495, and I541–L561.

This sequence belongs to the AAE transporter (TC 2.A.81) family. YbjL subfamily.

The protein localises to the cell membrane. The protein is Putative transport protein YPA_0617 of Yersinia pestis bv. Antiqua (strain Antiqua).